We begin with the raw amino-acid sequence, 252 residues long: Indole-3-glycerol phosphate synthase (252 aa).

It belongs to the TrpC family.

It catalyses the reaction 1-(2-carboxyphenylamino)-1-deoxy-D-ribulose 5-phosphate + H(+) = (1S,2R)-1-C-(indol-3-yl)glycerol 3-phosphate + CO2 + H2O. It functions in the pathway amino-acid biosynthesis; L-tryptophan biosynthesis; L-tryptophan from chorismate: step 4/5. The polypeptide is Indole-3-glycerol phosphate synthase (Leptospira interrogans serogroup Icterohaemorrhagiae serovar copenhageni (strain Fiocruz L1-130)).